The sequence spans 1115 residues: Carbamoyl phosphate synthase large chain (1115 aa).

The segment at 1-407 (MPRRTDLHHV…ALGKVMRSLE (407 aa)) is carboxyphosphate synthetic domain. ATP is bound by residues Arg134, Arg174, Gly180, Gly181, Glu213, Ile215, Glu220, Gly246, Val247, His248, Gln290, and Glu304. An ATP-grasp 1 domain is found at 138 to 333 (KDIVAKAGGE…IAKIAAKLAI (196 aa)). Mg(2+)-binding residues include Gln290, Glu304, and Asn306. Mn(2+)-binding residues include Gln290, Glu304, and Asn306. The interval 408–559 (TTRAGFWTAP…ELDPAAETEV (152 aa)) is oligomerization domain. The tract at residues 560-965 (APQTERPKVL…AFAKSQTAAY (406 aa)) is carbamoyl phosphate synthetic domain. Positions 693-884 (GDLLSAAGLP…LAKACARIML (192 aa)) constitute an ATP-grasp 2 domain. ATP contacts are provided by Arg729, Arg768, Leu770, Glu775, Gly800, Ile801, His802, Ser803, Gln843, and Glu855. Residues Gln843, Glu855, and Asn857 each contribute to the Mg(2+) site. The Mn(2+) site is built by Gln843, Glu855, and Asn857. Positions 966 to 1113 (GSLPAQGTVF…QELHRVIGGV (148 aa)) constitute an MGS-like domain. Residues 966-1115 (GSLPAQGTVF…LHRVIGGVER (150 aa)) are allosteric domain.

It belongs to the CarB family. As to quaternary structure, composed of two chains; the small (or glutamine) chain promotes the hydrolysis of glutamine to ammonia, which is used by the large (or ammonia) chain to synthesize carbamoyl phosphate. Tetramer of heterodimers (alpha,beta)4. Mg(2+) is required as a cofactor. It depends on Mn(2+) as a cofactor.

The enzyme catalyses hydrogencarbonate + L-glutamine + 2 ATP + H2O = carbamoyl phosphate + L-glutamate + 2 ADP + phosphate + 2 H(+). The catalysed reaction is hydrogencarbonate + NH4(+) + 2 ATP = carbamoyl phosphate + 2 ADP + phosphate + 2 H(+). It functions in the pathway amino-acid biosynthesis; L-arginine biosynthesis; carbamoyl phosphate from bicarbonate: step 1/1. It participates in pyrimidine metabolism; UMP biosynthesis via de novo pathway; (S)-dihydroorotate from bicarbonate: step 1/3. Large subunit of the glutamine-dependent carbamoyl phosphate synthetase (CPSase). CPSase catalyzes the formation of carbamoyl phosphate from the ammonia moiety of glutamine, carbonate, and phosphate donated by ATP, constituting the first step of 2 biosynthetic pathways, one leading to arginine and/or urea and the other to pyrimidine nucleotides. The large subunit (synthetase) binds the substrates ammonia (free or transferred from glutamine from the small subunit), hydrogencarbonate and ATP and carries out an ATP-coupled ligase reaction, activating hydrogencarbonate by forming carboxy phosphate which reacts with ammonia to form carbamoyl phosphate. The chain is Carbamoyl phosphate synthase large chain from Mycobacterium bovis (strain ATCC BAA-935 / AF2122/97).